A 175-amino-acid chain; its full sequence is Pituitary adenylate cyclase-activating polypeptide (175 aa).

Residues methionine 1–cysteine 24 form the signal peptide. The propeptide occupies serine 25–aspartate 78. Residues valine 149–leucine 157 are important for receptor binding. A Leucine amide modification is found at leucine 157. Residue lysine 168 is modified to Lysine amide. Residues isoleucine 172–leucine 175 constitute a propeptide that is removed on maturation.

The protein belongs to the glucagon family.

Its subcellular location is the secreted. PACAP is a neuropeptide involved in diverse array of physiological processes through activating the PACAP subfamily of class B1 G protein-coupled receptors: VIP receptor 1 (VIPR1), VIP receptor 2 (VIPR2), and PACAP type I receptor (ADCYAP1R1). Exerts neuroprotective and general cytoprotective effects due to anti-apoptotic, anti-inflammatory, and antioxidant actions. Promotes neuron projection development through the RAPGEF2/Rap1/B-Raf/ERK pathway. In chromaffin cells, induces long-lasting increase of intracellular calcium concentrations and neuroendocrine secretion. Involved in the control of glucose homeostasis, induces insulin secretion by pancreatic beta cells. PACAP exists in two bioactive forms from proteolysis of the same precursor protein, PACAP27 and PACAP38, which differ by eleven amino acid residues in the C-terminus. This chain is Pituitary adenylate cyclase-activating polypeptide, found in Mus musculus (Mouse).